A 587-amino-acid polypeptide reads, in one-letter code: Synaptotagmin-3 (587 aa).

Residues 1–54 lie on the Vesicular side of the membrane; sequence MSGDYEDDLCRRALILVSDLCARVRDADTNDRCQEFNELRIRGYPRGPDADISV. Residues 10–34 are cysteine motif; it reads CRRALILVSDLCARVRDADTNDRCQ. Residues 55–75 form a helical membrane-spanning segment; sequence SLLSVIVTFCGIVLLGVSLFV. Residues 76–587 lie on the Cytoplasmic side of the membrane; that stretch reads SWKLCWVPWR…KGLSEKENSE (512 aa). Over residues 183–205 the composition is skewed to low complexity; sequence PSQTSPELPSEGGTGSGLLLLPP. The interval 183 to 258 is disordered; the sequence is PSQTSPELPS…EERPPALPLP (76 aa). A compositionally biased stretch (polar residues) spans 213 to 224; the sequence is AQSHQQVTSLAP. The span at 229 to 244 shows a compositional bias: low complexity; the sequence is PALPRPLTQQTLTTQA. An Omega-N-methylarginine modification is found at R286. C2 domains lie at 296-417 and 428-562; these read PCGR…PLWR and DLGE…EHWH. The Ca(2+) site is built by D327, D333, D385, F386, D387, S390, D393, D459, D465, D519, and D521.

This sequence belongs to the synaptotagmin family. Homodimer; disulfide-linked via the cysteine motif. Can also form heterodimers with SYT6, SYT9 and SYT10. Ca(2+) is required as a cofactor.

The protein localises to the cell membrane. Its subcellular location is the cytoplasmic vesicle. It is found in the secretory vesicle membrane. Functionally, ca(2+) sensor involved in Ca(2+)-dependent exocytosis of secretory vesicles through Ca(2+) and phospholipid binding to the C2 domain. Ca(2+) induces binding of the C2-domains to phospholipid membranes and to assembled SNARE-complexes; both actions contribute to triggering exocytosis. Plays a role in dendrite formation by melanocytes. The polypeptide is Synaptotagmin-3 (Syt3) (Mus musculus (Mouse)).